Reading from the N-terminus, the 72-residue chain is Small proline-rich protein 2D (72 aa).

The segment covering 1-11 (MSYQQQQCKQP) has biased composition (low complexity). The tract at residues 1 to 20 (MSYQQQQCKQPCQPPPVCPT) is disordered. 3 consecutive repeat copies span residues 21–29 (PKCPEPCPP), 30–38 (PKCPEPCPS), and 39–47 (PKCPQPCPP). Residues 21–47 (PKCPEPCPPPKCPEPCPSPKCPQPCPP) form a 3 X 9 AA tandem repeats of P-K-C-P-[EQ]-P-C-P-[PS] region. Pro residues-rich tracts occupy residues 33 to 47 (PEPCPSPKCPQPCPP) and 56 to 72 (PVTPSPPCQPKCPPKSK). The segment at 33–72 (PEPCPSPKCPQPCPPQQCQQKYPPVTPSPPCQPKCPPKSK) is disordered.

The protein belongs to the cornifin (SPRR) family.

It localises to the cytoplasm. Functionally, cross-linked envelope protein of keratinocytes. It is a keratinocyte protein that first appears in the cell cytosol, but ultimately becomes cross-linked to membrane proteins by transglutaminase. All that results in the formation of an insoluble envelope beneath the plasma membrane. The sequence is that of Small proline-rich protein 2D (SPRR2D) from Homo sapiens (Human).